We begin with the raw amino-acid sequence, 198 residues long: MKQPQIPVKMLTTLTILMVFLCIGSYLLSPKWQAVRAEYQRQRDPLHQFASQQNPEAQLQALQDKIRANPQNSEQWALLGEYYLWQNDYSNSLLAYRQALQLRGENAELYAALATVLYYQASQHMTAQTRAMIDKALALDSNEITALMLLASDAFMQANYAQAIELWQKVMDLNSPRINRTQLVESINMAKLLQRRSD.

TPR repeat units lie at residues 73–106 (SEQWALLGEYYLWQNDYSNSLLAYRQALQLRGEN) and 144–177 (ITALMLLASDAFMQANYAQAIELWQKVMDLNSPR).

Functionally, required for formate-dependent nitrite reduction. Not required for the biosynthesis of any of the c-type cytochromes nor for the secretion of the periplasmic cytochromes. The chain is Formate-dependent nitrite reductase complex subunit NrfG (nrfG) from Escherichia coli O157:H7.